We begin with the raw amino-acid sequence, 1302 residues long: Serine-enriched protein (1302 aa).

In terms of domain architecture, BTB spans 40 to 158 (CDVTFLVGDT…IHTGCVTLQP (119 aa)). Disordered stretches follow at residues 325–532 (SIDP…RSPT), 575–624 (PIPP…SVMR), 648–685 (FTRA…QKQM), 701–752 (YAKM…SSDE), 834–858 (FTRR…DSND), 1045–1090 (FQRS…RTEN), 1102–1163 (FSRA…GEEE), and 1187–1252 (VLTQ…SASP). The span at 337–364 (RQHHRHRHHHQSLPKIRKAKSQSFRTRR) shows a compositional bias: basic residues. Polar residues-rich tracts occupy residues 378–388 (LTLNTSLTSGN), 410–430 (SPGS…TLRA), 437–449 (SGQL…TQGR), and 472–487 (GLRS…TVRS). Positions 589–623 (KSAEREREAAEAAAREKEKEKEKEAAQPQEKKSVM) are enriched in basic and acidic residues. The segment covering 664–680 (STFSASPAASSTAAKSA) has biased composition (low complexity). Residues 713–723 (KRDDEEKEKQK) show a composition bias toward basic and acidic residues. Over residues 736-748 (DLSQTNADQQVGG) the composition is skewed to polar residues. The segment covering 836-855 (RRSESREPIEPRISEERESD) has biased composition (basic and acidic residues). Low complexity-rich tracts occupy residues 1047–1056 (RSGSSCGGRK) and 1107–1128 (SPLS…SSGS). Positions 1187–1207 (VLTQQLSTGSMSTPSGYTNGT) are enriched in polar residues. The segment covering 1226–1252 (APLSSCGFSSGSEFEPPSPRRAASASP) has biased composition (low complexity).

The sequence is that of Serine-enriched protein (gprs) from Drosophila melanogaster (Fruit fly).